A 130-amino-acid chain; its full sequence is MARLNPIADAMSTIKNAGDAGKGEVIVEPASKLLGAMLRVMQENGFISGFEFIDDGRGGQFRVQLSGTINKCGAISPRFPVAMADMEYWESQYLPAKNFGILIVSTSKGVISHAEARNEGIGGQLLGYVY.

It belongs to the universal ribosomal protein uS8 family. In terms of assembly, part of the 30S ribosomal subunit.

Its function is as follows. One of the primary rRNA binding proteins, it binds directly to 16S rRNA central domain where it helps coordinate assembly of the platform of the 30S subunit. In Methanoculleus marisnigri (strain ATCC 35101 / DSM 1498 / JR1), this protein is Small ribosomal subunit protein uS8.